Reading from the N-terminus, the 137-residue chain is Large ribosomal subunit protein uL16 (137 aa).

It belongs to the universal ribosomal protein uL16 family. As to quaternary structure, part of the 50S ribosomal subunit.

Its function is as follows. Binds 23S rRNA and is also seen to make contacts with the A and possibly P site tRNAs. The sequence is that of Large ribosomal subunit protein uL16 from Roseobacter denitrificans (strain ATCC 33942 / OCh 114) (Erythrobacter sp. (strain OCh 114)).